Reading from the N-terminus, the 602-residue chain is MRNPEAPRLVGVYRRVVPVGARRVIAEHVDSGFRQQVKEGIAAAAAKRDQINRVRVARSHRKLLARHDRRVVSVGKAPRIAHVVPRATPLDARRANLDDVTEALRHAGIDYFCVRSASETSTAVAVREDDREHVITALRQACRVRPGYVIPVGKGEPLDEAALPAFGTGPWKRVSGSPVFRCTWYRTDETGRMVFGLRYGCDIEFWHQEGGELVSPRRNPVAEAVPVEEEATEADESLFTDLAPLPEDRIPRAGEDLDAGDGAAGGPRPGLVRTRPAFAAGSVGRRTFPIDVVYTWVDGSDPAWIRSRAEFSDRPYHEEAANAARYLSRDELRYSLRSLNLYAPWVRNIYLVTADQTPDWLNTDHPRLKVVSHKEIFSEPTSLPTFNSHAIESQLHHIDGLSEHFLYFNDDVMLGRETLPQHFFLPNGLGQYYLSPALIPFGEPNSEDPPVAAAGKNNRRLIAERFGGSTIFRKMKHVPHALHRGVLEAIETDFADEHRRTAASRFRSAGDISVTSSLHHYYAFHTGRSFPGDQLVYRYLDVGKPGAERVLGRLLAEREAHVFCLNDTTSTESELAHQQALMTRFLDEYFPFPSPYERGADD.

The disordered stretch occupies residues 251-271 (PRAGEDLDAGDGAAGGPRPGL).

This sequence belongs to the stealth family.

The polypeptide is Exopolysaccharide phosphotransferase SCO2594 (Streptomyces coelicolor (strain ATCC BAA-471 / A3(2) / M145)).